The primary structure comprises 524 residues: MVPQALLFVPLLVFPLCFGKFPIYTILDKLGPWSPIDIHHLSCPNNLVVEDEGCTNLSGFSYMELKVGYILAIKMNGFTCTGVVTEAETYTNFVGYVTTTFKRKHFRPTPDACRAAYNWKMAGDPRYEESLHNPYPDYRWLRTVKTTKESLVIISPSVADLDPYDRSLHSRVFPSGKCSGVAVSSTYCSTNHDYTIWMPENPRLGMSCDIFTNSRGKRASKGSETCGFVDERGLYKSLKGACKLKLCGVLGLRLMDGTWVAMQTSNETKWCPPDQLVNLHDFRSDEIEHLVVEELVRKREECLDALESIMTTKSVSFRRLSHLRKLVPGFGKAYTIFNKTLMEADAHYKSVRTWNEILPSKGCLRVGGRCHPHVNGVFFNGIILGPDGNVLIPEMQSSLLQQHMELLESSVIPLVHPLADPSTVFKDGDEAEDFVEVHLPDVHNQVSGVDLGLPNWGKYVLLSAGALTALMLIIFLMTCCRRVNRSEPTQHNLRGTGREVSVTPQSGKIISSWESHKSGGETRL.

Positions 1 to 19 (MVPQALLFVPLLVFPLCFG) are cleaved as a signal peptide. Residues 20–459 (KFPIYTILDK…DLGLPNWGKY (440 aa)) are Virion surface-facing. Cystine bridges form between C43/C302, C54/C226, C80/C113, C178/C188, C208/C247, and C242/C271. Residue N56 is glycosylated (N-linked (GlcNAc...) asparagine; by host). 2 N-linked (GlcNAc...) asparagine; by host glycosylation sites follow: N266 and N338. C363 and C370 are joined by a disulfide. Residues 460–480 (VLLSAGALTALMLIIFLMTCC) traverse the membrane as a helical segment. C480 carries S-palmitoyl cysteine; by host lipidation. Topologically, residues 481–524 (RRVNRSEPTQHNLRGTGREVSVTPQSGKIISSWESHKSGGETRL) are intravirion.

Belongs to the lyssavirus glycoprotein family. In terms of assembly, homotrimer. Interacts with matrix protein. Interacts with host TRFC. Interacts with host BST2; this interaction inhibits viral budding by tethering new virions to the cell surface. Interacts with ITGB1. Interacts with host GRM2. Post-translationally, glycosylated and palmitoylated by host. Glycosylation is crucial for glycoprotein export at the cell surface.

It is found in the virion membrane. Attaches the virus to host cellular receptor, inducing endocytosis of the virion by using different host proteins including TFRC, GRM2 and ITGB1. In the endosome, the acidic pH induces conformational changes in the glycoprotein trimer, which trigger fusion between virus and cell membrane. There is convincing in vitro evidence that the muscular form of the nicotinic acetylcholine receptor (nAChR), the neuronal cell adhesion molecule (NCAM), and the p75 neurotrophin receptor (p75NTR) bind glycoprotein and thereby facilitate rabies virus entry into cells. This is Glycoprotein (G) from Rabies virus (strain ERA) (RABV).